The following is a 754-amino-acid chain: 5-methyltetrahydropteroyltriglutamate--homocysteine methyltransferase (754 aa).

5-methyltetrahydropteroyltri-L-glutamate is bound by residues 17-20 and K117; that span reads RELK. L-homocysteine contacts are provided by residues 431–433 and E484; that span reads IGS. L-methionine-binding positions include 431–433 and E484; that span reads IGS. 5-methyltetrahydropteroyltri-L-glutamate is bound by residues 515 to 516 and W561; that span reads RC. Residue D599 participates in L-homocysteine binding. D599 lines the L-methionine pocket. E605 contributes to the 5-methyltetrahydropteroyltri-L-glutamate binding site. Positions 641, 643, and 665 each coordinate Zn(2+). Residue H694 is the Proton donor of the active site. A Zn(2+)-binding site is contributed by C726.

This sequence belongs to the vitamin-B12 independent methionine synthase family. The cofactor is Zn(2+).

It carries out the reaction 5-methyltetrahydropteroyltri-L-glutamate + L-homocysteine = tetrahydropteroyltri-L-glutamate + L-methionine. It participates in amino-acid biosynthesis; L-methionine biosynthesis via de novo pathway; L-methionine from L-homocysteine (MetE route): step 1/1. Catalyzes the transfer of a methyl group from 5-methyltetrahydrofolate to homocysteine resulting in methionine formation. This Salmonella paratyphi A (strain ATCC 9150 / SARB42) protein is 5-methyltetrahydropteroyltriglutamate--homocysteine methyltransferase.